A 337-amino-acid polypeptide reads, in one-letter code: tRNA N6-adenosine threonylcarbamoyltransferase (337 aa).

2 residues coordinate Fe cation: His110 and His114. Residues 132 to 136 (VVSGG), Asp165, Gly178, Asp182, and Asn268 each bind substrate. Position 293 (Asp293) interacts with Fe cation.

This sequence belongs to the KAE1 / TsaD family. It depends on Fe(2+) as a cofactor.

The protein resides in the cytoplasm. It carries out the reaction L-threonylcarbamoyladenylate + adenosine(37) in tRNA = N(6)-L-threonylcarbamoyladenosine(37) in tRNA + AMP + H(+). Its function is as follows. Required for the formation of a threonylcarbamoyl group on adenosine at position 37 (t(6)A37) in tRNAs that read codons beginning with adenine. Is involved in the transfer of the threonylcarbamoyl moiety of threonylcarbamoyl-AMP (TC-AMP) to the N6 group of A37, together with TsaE and TsaB. TsaD likely plays a direct catalytic role in this reaction. This chain is tRNA N6-adenosine threonylcarbamoyltransferase, found in Sulfurihydrogenibium sp. (strain YO3AOP1).